The sequence spans 357 residues: MLSLQTLAKKVVACNYLSSDYDYMLQRFGLWWDLGPIHLCNNCKQIFSYKHLQCFSEDDLCLEAALVKAVKSDNLELIRLFVDWGANPEYGLIRVPAVHLKRLCTELGGLTPVSEPRLLEILKEVAKLKSCAGVLLGYDMFCHNPLLETVTRTTLDTVTYTCSNIPLTGDTAHHLLTKFWFALALRHNFTKAIHYFYKRHKNHLYWRVACSLYFNNIFDIHELCREKEICISPNLMMKFACLRKKNYAAIYYCYRLGASLDYGMNLSIYNNNTLNMFFCIDLGATDFDRAQRIAHKTYMYNLSNIFLVKQLFSRDVTLALDVTEPQEIYDMLKSYTSKNLKRAEEYLTAHPEIIVID.

Belongs to the asfivirus MGF 360 family. As to quaternary structure, interacts with host IRF3 and TRIM21; these interactions mediates degradation of IRF3 through TRIM21 and ubiquitin-meditated proteolysis.

The protein resides in the host cytoplasm. Functionally, plays a role in virus cell tropism, and may be required for efficient virus replication in macrophages. Also inhibits the host cGAS/STING-mediated type I interferon production by inducing host IRF3 degradation through the proteasome pathway. The polypeptide is Protein MGF 360-14L (Ornithodoros (relapsing fever ticks)).